The chain runs to 349 residues: MDFELEPTLESIIHQDSLKWIFVGGKGGVGKTTTSSSVAVQLALAYPNDEFLLISTDPAHNLSDAFCQKFGKDARKVEGLSNLSCMEIDPDAAMSDLQTQAQQYNNDPNDPLKSMMSDMTGSIPGIDEALSFMEVLKHIKNQRAADDGSESNAIQYKTIIFDTAPTGHTLRFLQLPATLEKLLAKFKDLSGKFGPMLNMLGGGTNQQQDIFSKMNEIQKSVSEVNEQFTNPDMTTFICVCISEFLSLYETERMIQELMSYNMDVNSIVVNQLLFAEEDDCKRCQSRWKMQKKYLDQMGELYEDYHLVKMPLLGSEIRGVNNLKKFSKFLLKPYDPKVDKALVFELEEAK.

Lysine 26–threonine 33 is an ATP binding site. Residue aspartate 57 is part of the active site. 2 residues coordinate ATP: glutamate 243 and asparagine 270. 2 residues coordinate Zn(2+): cysteine 280 and cysteine 283.

This sequence belongs to the arsA ATPase family. As to quaternary structure, homodimer. Component of the Golgi to ER traffic (GET) complex, which is composed of GET1, GET2 and GET3. Within the complex, GET1 and GET2 form a heterotetramer which is stabilized by phosphatidylinositol binding and which binds to the GET3 homodimer. Interacts with the chloride channel protein GEF1.

The protein resides in the cytoplasm. It localises to the endoplasmic reticulum. Its subcellular location is the golgi apparatus. ATPase required for the post-translational delivery of tail-anchored (TA) proteins to the endoplasmic reticulum. Recognizes and selectively binds the transmembrane domain of TA proteins in the cytosol. This complex then targets to the endoplasmic reticulum by membrane-bound receptors GET1 and GET2, where the tail-anchored protein is released for insertion. This process is regulated by ATP binding and hydrolysis. ATP binding drives the homodimer towards the closed dimer state, facilitating recognition of newly synthesized TA membrane proteins. ATP hydrolysis is required for insertion. Subsequently, the homodimer reverts towards the open dimer state, lowering its affinity for the GET1-GET2 receptor, and returning it to the cytosol to initiate a new round of targeting. Cooperates with the HDEL receptor ERD2 to mediate the ATP-dependent retrieval of resident ER proteins that contain a C-terminal H-D-E-L retention signal from the Golgi to the ER. Involved in low-level resistance to the oxyanions arsenite and arsenate, and in heat tolerance. The polypeptide is ATPase GET3 (Clavispora lusitaniae (strain ATCC 42720) (Yeast)).